The sequence spans 132 residues: Fluoride-specific ion channel FluC 2 (132 aa).

A run of 4 helical transmembrane segments spans residues valine 5–glycine 25, threonine 34–alanine 54, proline 59–phenylalanine 79, and valine 95–isoleucine 115. 2 residues coordinate Na(+): glycine 71 and threonine 74.

Belongs to the fluoride channel Fluc/FEX (TC 1.A.43) family.

The protein localises to the cell membrane. The catalysed reaction is fluoride(in) = fluoride(out). Na(+) is not transported, but it plays an essential structural role and its presence is essential for fluoride channel function. In terms of biological role, fluoride-specific ion channel. Important for reducing fluoride concentration in the cell, thus reducing its toxicity. In Bacillus licheniformis (strain ATCC 14580 / DSM 13 / JCM 2505 / CCUG 7422 / NBRC 12200 / NCIMB 9375 / NCTC 10341 / NRRL NRS-1264 / Gibson 46), this protein is Fluoride-specific ion channel FluC 2.